A 255-amino-acid chain; its full sequence is NAD-dependent protein deacylase (255 aa).

The Deacetylase sirtuin-type domain occupies 1-253 (MEFSDELLAS…PLLLQALRRS (253 aa)). 22-42 (GAGVSAESGIPTFRDALTGFW) is a binding site for NAD(+). Substrate-binding residues include Tyr67 and Arg70. 101 to 104 (QNVD) contacts NAD(+). His119 serves as the catalytic Proton acceptor. Zn(2+) contacts are provided by Cys127, Cys130, Cys155, and Cys158. Residues 195–197 (GTS), 221–223 (NPA), and Ala239 each bind NAD(+).

The protein belongs to the sirtuin family. Class III subfamily. Requires Zn(2+) as cofactor.

The protein localises to the cytoplasm. The catalysed reaction is N(6)-acetyl-L-lysyl-[protein] + NAD(+) + H2O = 2''-O-acetyl-ADP-D-ribose + nicotinamide + L-lysyl-[protein]. It catalyses the reaction N(6)-succinyl-L-lysyl-[protein] + NAD(+) + H2O = 2''-O-succinyl-ADP-D-ribose + nicotinamide + L-lysyl-[protein]. Its function is as follows. NAD-dependent lysine deacetylase and desuccinylase that specifically removes acetyl and succinyl groups on target proteins. Modulates the activities of several proteins which are inactive in their acylated form. The chain is NAD-dependent protein deacylase from Methylococcus capsulatus (strain ATCC 33009 / NCIMB 11132 / Bath).